The primary structure comprises 105 residues: N(4)-acetylcytidine amidohydrolase (105 aa).

Residues 8-93 (TFFEFLTPLV…ALIQEIYPNI (86 aa)) enclose the ASCH domain. Lys22 acts as the Proton acceptor in catalysis. Thr25 serves as the catalytic Nucleophile. Glu75 functions as the Proton donor in the catalytic mechanism.

The protein belongs to the N(4)-acetylcytidine amidohydrolase family.

The catalysed reaction is N(4)-acetylcytidine + H2O = cytidine + acetate + H(+). It catalyses the reaction N(4)-acetyl-2'-deoxycytidine + H2O = 2'-deoxycytidine + acetate + H(+). The enzyme catalyses N(4)-acetylcytosine + H2O = cytosine + acetate + H(+). Its function is as follows. Catalyzes the hydrolysis of N(4)-acetylcytidine (ac4C). In Vibrio cholerae serotype O1 (strain ATCC 39315 / El Tor Inaba N16961), this protein is N(4)-acetylcytidine amidohydrolase.